Consider the following 66-residue polypeptide: Toxin BeM14 (66 aa).

The LCN-type CS-alpha/beta domain maps to 2–66 (RDAYIADDRN…IRKIPGEECR (65 aa)). Disulfide bonds link Cys-12-Cys-65, Cys-16-Cys-36, Cys-22-Cys-46, and Cys-26-Cys-48.

Belongs to the long (4 C-C) scorpion toxin superfamily. Sodium channel inhibitor family. Alpha subfamily. In terms of tissue distribution, expressed by the venom gland.

Its subcellular location is the secreted. Functionally, alpha toxins bind voltage-independently at site-3 of sodium channels (Nav) and inhibit the inactivation of the activated channels, thereby blocking neuronal transmission. Has paralytic activity in mice. In Mesobuthus eupeus (Lesser Asian scorpion), this protein is Toxin BeM14.